Here is a 342-residue protein sequence, read N- to C-terminus: tRNA-specific 2-thiouridylase MnmA (342 aa).

Residues 6-13 (LLSGGVDS) and L32 each bind ATP. The Nucleophile role is filled by C92. C92 and C191 are joined by a disulfide. ATP is bound at residue G116. Residues 138–140 (KDQ) form an interaction with tRNA region. C191 acts as the Cysteine persulfide intermediate in catalysis. The interaction with tRNA stretch occupies residues 293-294 (RY).

It belongs to the MnmA/TRMU family.

The protein resides in the cytoplasm. It catalyses the reaction S-sulfanyl-L-cysteinyl-[protein] + uridine(34) in tRNA + AH2 + ATP = 2-thiouridine(34) in tRNA + L-cysteinyl-[protein] + A + AMP + diphosphate + H(+). In terms of biological role, catalyzes the 2-thiolation of uridine at the wobble position (U34) of tRNA, leading to the formation of s(2)U34. This is tRNA-specific 2-thiouridylase MnmA from Helicobacter acinonychis (strain Sheeba).